The following is a 311-amino-acid chain: Probable dihydroorotate dehydrogenase A (fumarate) (311 aa).

FMN contacts are provided by residues serine 20 and 44–45 (KT). Residues lysine 44, 68–72 (NSMGL), and asparagine 127 contribute to the substrate site. Asparagine 127 is an FMN binding site. Cysteine 130 (nucleophile) is an active-site residue. Positions 164 and 192 each coordinate FMN. 193–194 (NS) contacts substrate. FMN is bound by residues glycine 221, 249–250 (GG), and 271–272 (GT).

The protein belongs to the dihydroorotate dehydrogenase family. Type 1 subfamily. Homodimer. FMN serves as cofactor.

It localises to the cytoplasm. The enzyme catalyses (S)-dihydroorotate + fumarate = orotate + succinate. The protein operates within pyrimidine metabolism; UMP biosynthesis via de novo pathway. Functionally, catalyzes the conversion of dihydroorotate to orotate with fumarate as the electron acceptor. This is Probable dihydroorotate dehydrogenase A (fumarate) (pyrDA) from Enterococcus faecalis (strain ATCC 700802 / V583).